Here is a 757-residue protein sequence, read N- to C-terminus: Transcription factor FBD3 (757 aa).

A disordered region spans residues 1-24 (MSSKRLSQNEQEKSPGTGPPTHKR). The zn(2)-C6 fungal-type DNA-binding region spans 31 to 58 (CNACRMRKSRCDGHRPSCSSCLSLGVNC). Disordered regions lie at residues 106 to 161 (GGTD…DANT) and 202 to 222 (VAPS…TDVP). Residues 111–120 (NNHHNNHDSP) show a composition bias toward basic and acidic residues. Over residues 125-135 (TIAQSITSSRP) the composition is skewed to polar residues.

Its subcellular location is the nucleus. In terms of biological role, transcription factor; part of the Fusarium detoxification of benzoxazolinone cluster involved in the degradation of benzoxazolinones produced by the host plant. Maize, wheat, and rye produce the 2 benzoxazinone phytoanticipins 2,4-dihy-droxy-7-methoxy-1,4-benzoxazin-3-one (DIMBOA) and 2,4-dihydroxy-1,4-benzoxazin-3-one (DIBOA) that, due to their inherent instability once released, spontaneously degrade to the more stable corresponding benzoxazolinones, 6-methoxy-2-benzoxazolinone (MBOA) and 2-benzoxazolinone (BOA), respectively. FDB3 controls the transcription of the FDB gene cluster in response to 6-methoxy-2-benzoxazolinone (MBOA). This Fusarium pseudograminearum (strain CS3096) (Wheat and barley crown-rot fungus) protein is Transcription factor FBD3.